The chain runs to 445 residues: MKERKFFGTDGIRGKVGSGQMTPELALKLGWAAGRVLSRSGTKKVIIGKDTRISGYMFESALEAGLSAAGLNVMLMGPMPTPAVAYLTRTFRAEAGVVISASHNPYYDNGIKFFSTDGSKLDDNLELEIEAELEKPLVCVESHLLGKVSRIEDARGRYIEYCKGNFPAEHTLTGLKIVVDCAHGATYHIAPAVFRELGAEVIAIGDKPNGMNINDKVGATSMGKICETVLAESADLGIALDGDGDRIMMVNSKGEVIDGDQILYILACDAKSRGVLRGGVVGTLMSNLGLDLALQALDIPFARSKVGDRYVMELLKELDWRIGGENSGHILNLDHGTTGDGIIAGILVLAAMRRQNATLEELTSAMEMLPQVLVNVRFEGEHDPLKSDKVKAVQAQVESQLGLRGRVLLRKSGTEPLIRVMVEGDDHSAVLAHANLIADAVKSAS.

The Phosphoserine intermediate role is filled by Ser-102. Mg(2+) is bound by residues Ser-102, Asp-241, Asp-243, and Asp-245. Residue Ser-102 is modified to Phosphoserine.

The protein belongs to the phosphohexose mutase family. Mg(2+) is required as a cofactor. Activated by phosphorylation.

The enzyme catalyses alpha-D-glucosamine 1-phosphate = D-glucosamine 6-phosphate. Its function is as follows. Catalyzes the conversion of glucosamine-6-phosphate to glucosamine-1-phosphate. This chain is Phosphoglucosamine mutase, found in Shewanella sp. (strain W3-18-1).